Here is a 200-residue protein sequence, read N- to C-terminus: LIM domain-containing protein WLIM2a (200 aa).

LIM zinc-binding domains lie at 8 to 68 and 107 to 167; these read QKCR…LFKE and DKCA…LFKE.

In terms of assembly, interacts with F-actin. As to expression, expressed in roots, leaves, stems, flowers and siliques. Barely detected in pollen.

The protein localises to the cytoplasm. It is found in the cytoskeleton. Functionally, binds to actin filaments and promotes cross-linking into thick bundles. Has an actin-stabilizing activity. The actin regulatory activities are not regulated by pH and [Ca(2+)]. The chain is LIM domain-containing protein WLIM2a from Arabidopsis thaliana (Mouse-ear cress).